Here is a 429-residue protein sequence, read N- to C-terminus: MAFLALGINHKTASVDVRERVAFTPEQLVEALQQLCRLTDSREAAILSTCNRSELYIEQEHLSADVVLRWLADYHHLDLDDLRASAYVHEDDAAVRHMMRVASGLDSLVLGEPQILGQMKSAYAVAREAGTVGPLLGRLFQATFNSAKQVRTDTAIGENPVSVAFAAVSLAKQIFSDLQRSQALLIGAGETITLVARHLHDLGVKRIVVANRTLERASILAEQFGAHAVLLADIPAELVRSDIVISSTASQLPILGKGAVESALKLRKHKPIFMVDIAVPRDIEPEVGELDDVYLYSVDDLHEVVAENLKSRQGAAQAAEEMVSAGADDFMVRLRELAAVDVLKAYRQQGERLRDEELLKAQRLLANGSSAEDVLVQLARGLTNKLLHAPSVQLKKLTAEGRLDALAMAQELFALGEGASDSSSDKKLQ.

Substrate is bound by residues Thr49–Arg52, Ser107, Glu112–Gln114, and Gln118. Cys50 (nucleophile) is an active-site residue. Gly187 to Ile192 contributes to the NADP(+) binding site.

Belongs to the glutamyl-tRNA reductase family. In terms of assembly, homodimer.

The enzyme catalyses (S)-4-amino-5-oxopentanoate + tRNA(Glu) + NADP(+) = L-glutamyl-tRNA(Glu) + NADPH + H(+). The protein operates within porphyrin-containing compound metabolism; protoporphyrin-IX biosynthesis; 5-aminolevulinate from L-glutamyl-tRNA(Glu): step 1/2. Catalyzes the NADPH-dependent reduction of glutamyl-tRNA(Glu) to glutamate 1-semialdehyde (GSA). The protein is Glutamyl-tRNA reductase of Pseudomonas fluorescens (strain SBW25).